A 106-amino-acid chain; its full sequence is HIG1 domain family member 2A (106 aa).

Position 2 is an N-acetylalanine (Ala2). An HIG1 domain is found at 20–106 (VIEGFSPTVY…LAASAMKSQA (87 aa)). Helical transmembrane passes span 47–67 (PMVP…LYCF) and 83–103 (IAAQ…SAMK).

Associates with cytochrome c oxidase (COX, complex IV); proposed complex component.

Its subcellular location is the mitochondrion membrane. It localises to the mitochondrion inner membrane. Its function is as follows. Proposed subunit of cytochrome c oxidase (COX, complex IV), which is the terminal component of the mitochondrial respiratory chain that catalyzes the reduction of oxygen to water. May be involved in cytochrome c oxidase activity. May play a role in the assembly of respiratory supercomplexes. The protein is HIG1 domain family member 2A (Higd2a) of Mus musculus (Mouse).